A 185-amino-acid polypeptide reads, in one-letter code: MDIDPYKEFGATVELLSFLPSDFFPSVRDLLDTASALYREALESPEHCSPHHTALRQAILCWGELMTLATWVGNNLQDPASRDLVVNYVNTNMGLKIRQLLWFHISCLTFGRETVLEYLVSFGVWIRTPPAYRPPNAPILSTLPETTVVRRRDRGRSPRRRTPSPRRRRSQSPRRRRSQSRESQC.

The segment at 136-185 (NAPILSTLPETTVVRRRDRGRSPRRRTPSPRRRRSQSPRRRRSQSRESQC) is disordered. Residues 149 to 178 (VRRRDRGRSPRRRTPSPRRRRSQSPRRRRS) are compositionally biased toward basic residues. Phosphoserine; by host occurs at positions 157, 164, and 172. The stretch at 157–163 (SPRRRTP) is one 1; half-length repeat. The tract at residues 157 to 179 (SPRRRTPSPRRRRSQSPRRRRSQ) is 3 X 8 AA repeats of S-P-R-R-R-[PR]-S-Q. A Bipartite nuclear localization signal motif is present at residues 160–177 (RRTPSPRRRRSQSPRRRR). 2 consecutive repeat copies span residues 164–171 (SPRRRRSQ) and 172–179 (SPRRRRSQ). Residues 179 to 185 (QSRESQC) are RNA binding.

This sequence belongs to the orthohepadnavirus core antigen family. Homodimerizes, then multimerizes. Interacts with cytosol exposed regions of viral L glycoprotein present in the reticulum-to-Golgi compartment. Interacts with human FLNB. Phosphorylated form interacts with host importin alpha; this interaction depends on the exposure of the NLS, which itself depends upon genome maturation and/or phosphorylation of the capsid protein. Interacts with host NUP153. Phosphorylated by host SRPK1, SRPK2, and maybe protein kinase C or GAPDH. Phosphorylation is critical for pregenomic RNA packaging. Protein kinase C phosphorylation is stimulated by HBx protein and may play a role in transport of the viral genome to the nucleus at the late step during the viral replication cycle.

Its subcellular location is the virion. The protein localises to the host cytoplasm. Self assembles to form an icosahedral capsid. Most capsids appear to be large particles with an icosahedral symmetry of T=4 and consist of 240 copies of capsid protein, though a fraction forms smaller T=3 particles consisting of 180 capsid proteins. Entering capsids are transported along microtubules to the nucleus. Phosphorylation of the capsid is thought to induce exposure of nuclear localization signal in the C-terminal portion of the capsid protein that allows binding to the nuclear pore complex via the importin (karyopherin-) alpha and beta. Capsids are imported in intact form through the nuclear pore into the nuclear basket, where it probably binds NUP153. Only capsids that contain the mature viral genome can release the viral DNA and capsid protein into the nucleoplasm. Immature capsids get stuck in the basket. Capsids encapsulate the pre-genomic RNA and the P protein. Pre-genomic RNA is reverse-transcribed into DNA while the capsid is still in the cytoplasm. The capsid can then either be directed to the nucleus, providing more genomes for transcription, or bud through the endoplasmic reticulum to provide new virions. In Homo sapiens (Human), this protein is Capsid protein.